Reading from the N-terminus, the 157-residue chain is Transcriptional repressor NrdR (157 aa).

A compositionally biased stretch (polar residues) spans 1 to 11; the sequence is MQCPSCQNTDS. A disordered region spans residues 1-21; that stretch reads MQCPSCQNTDSRVLESRSADT. Residues 3–34 fold into a zinc finger; that stretch reads CPSCQNTDSRVLESRSADTGKSVRRRRECLNC. Residues 49–139 enclose the ATP-cone domain; it reads ITVIKRSESK…VYRQFNGIND (91 aa).

Belongs to the NrdR family. Zn(2+) serves as cofactor.

Functionally, negatively regulates transcription of bacterial ribonucleotide reductase nrd genes and operons by binding to NrdR-boxes. The sequence is that of Transcriptional repressor NrdR from Prochlorococcus marinus (strain MIT 9211).